The primary structure comprises 217 residues: GTP cyclohydrolase 1 (217 aa).

Residues cysteine 109, histidine 112, and cysteine 180 each coordinate Zn(2+).

Belongs to the GTP cyclohydrolase I family. In terms of assembly, toroid-shaped homodecamer, composed of two pentamers of five dimers.

It carries out the reaction GTP + H2O = 7,8-dihydroneopterin 3'-triphosphate + formate + H(+). It participates in cofactor biosynthesis; 7,8-dihydroneopterin triphosphate biosynthesis; 7,8-dihydroneopterin triphosphate from GTP: step 1/1. The sequence is that of GTP cyclohydrolase 1 from Aliivibrio fischeri (strain ATCC 700601 / ES114) (Vibrio fischeri).